A 485-amino-acid polypeptide reads, in one-letter code: NADH-quinone oxidoreductase subunit N (485 aa).

Transmembrane regions (helical) follow at residues 8–28 (LIALLPLLIVGLTVVVVMLSI), 35–55 (FINTTLTVIGLNLALLSLYFV), 75–95 (LYIGLVLVASLATATFAYSWL), 104–124 (EFYLLVLIATVGGILLACANH), 125–145 (LASLFIGIELLTLPLFGLIGY), 159–179 (YMLLSAAASSFMLFGIALLYA), 203–223 (ILSGLGMLVVGLGFKLSLVPF), 235–255 (PAPVSTFLATASKIAIFAVVI), 271–291 (TVLTVIAIASMLFGNLMALTQ), 297–317 (LLGYSSIAHLGYLLVALVAVQ), 326–346 (VGIYLAGYLFSSIGAFGVVSL), 383–403 (LAGIPMTFGFIGKFYVIVLGV), 406–426 (ELWWLTGAVVVGSAIGLYYYL), and 455–475 (MVVLISALLVLALGIWPQPLI).

The protein belongs to the complex I subunit 2 family. As to quaternary structure, NDH-1 is composed of 13 different subunits. Subunits NuoA, H, J, K, L, M, N constitute the membrane sector of the complex.

It localises to the cell inner membrane. It catalyses the reaction a quinone + NADH + 5 H(+)(in) = a quinol + NAD(+) + 4 H(+)(out). In terms of biological role, NDH-1 shuttles electrons from NADH, via FMN and iron-sulfur (Fe-S) centers, to quinones in the respiratory chain. The immediate electron acceptor for the enzyme in this species is believed to be ubiquinone. Couples the redox reaction to proton translocation (for every two electrons transferred, four hydrogen ions are translocated across the cytoplasmic membrane), and thus conserves the redox energy in a proton gradient. In Photorhabdus laumondii subsp. laumondii (strain DSM 15139 / CIP 105565 / TT01) (Photorhabdus luminescens subsp. laumondii), this protein is NADH-quinone oxidoreductase subunit N.